The primary structure comprises 372 residues: Cytochrome b (372 aa).

4 helical membrane-spanning segments follow: residues 25–45, 69–90, 105–125, and 170–190; these read FGSM…FLAI, WIMQ…YIHI, WLSG…GYVL, and FFAL…IHII. Residues histidine 75 and histidine 89 each contribute to the heme b site. Heme b contacts are provided by histidine 174 and histidine 188. An a ubiquinone-binding site is contributed by histidine 193. The next 4 membrane-spanning stretches (helical) occupy residues 218-238, 280-300, 312-332, and 339-358; these read YKDM…LSFS, LGGT…PFTH, LSQI…WTAT, and FISI…IMNP.

It belongs to the cytochrome b family. In terms of assembly, the cytochrome bc1 complex contains 3 respiratory subunits (MT-CYB, CYC1 and UQCRFS1), 2 core proteins (UQCRC1 and UQCRC2) and probably 6 low-molecular weight proteins. It depends on heme b as a cofactor.

It is found in the mitochondrion inner membrane. Its function is as follows. Component of the ubiquinol-cytochrome c reductase complex (complex III or cytochrome b-c1 complex) that is part of the mitochondrial respiratory chain. The b-c1 complex mediates electron transfer from ubiquinol to cytochrome c. Contributes to the generation of a proton gradient across the mitochondrial membrane that is then used for ATP synthesis. The sequence is that of Cytochrome b (MT-CYB) from Walterinnesia aegyptia (Desert black snake).